The following is a 364-amino-acid chain: Dihydroorotate dehydrogenase (quinone) (364 aa).

FMN contacts are provided by residues 61-65 and T85; that span reads AGYDK. K65 is a substrate binding site. 110 to 114 contributes to the substrate binding site; that stretch reads NRLGF. Residues N139 and N170 each contribute to the FMN site. Residue N170 coordinates substrate. The active-site Nucleophile is S173. N175 provides a ligand contact to substrate. The FMN site is built by K215 and S243. 244 to 245 serves as a coordination point for substrate; that stretch reads NT. FMN contacts are provided by residues G266, G295, and 316–317; that span reads YS.

Belongs to the dihydroorotate dehydrogenase family. Type 2 subfamily. Monomer. FMN serves as cofactor.

The protein resides in the cell membrane. The enzyme catalyses (S)-dihydroorotate + a quinone = orotate + a quinol. The protein operates within pyrimidine metabolism; UMP biosynthesis via de novo pathway; orotate from (S)-dihydroorotate (quinone route): step 1/1. Functionally, catalyzes the conversion of dihydroorotate to orotate with quinone as electron acceptor. This chain is Dihydroorotate dehydrogenase (quinone), found in Brucella melitensis biotype 2 (strain ATCC 23457).